The primary structure comprises 237 residues: tRNA (guanine-N(1)-)-methyltransferase (237 aa).

Residues Gly-113 and 133 to 138 contribute to the S-adenosyl-L-methionine site; that span reads VGDFIV.

The protein belongs to the RNA methyltransferase TrmD family. In terms of assembly, homodimer.

It localises to the cytoplasm. The catalysed reaction is guanosine(37) in tRNA + S-adenosyl-L-methionine = N(1)-methylguanosine(37) in tRNA + S-adenosyl-L-homocysteine + H(+). In terms of biological role, specifically methylates guanosine-37 in various tRNAs. The sequence is that of tRNA (guanine-N(1)-)-methyltransferase from Hydrogenovibrio crunogenus (strain DSM 25203 / XCL-2) (Thiomicrospira crunogena).